The following is a 209-amino-acid chain: Yop proteins translocation protein K (209 aa).

Belongs to an operon involved in the translocation of Yop proteins across the bacterial membranes or in the specific control of this function. In Yersinia pseudotuberculosis serotype I (strain IP32953), this protein is Yop proteins translocation protein K (yscK).